The primary structure comprises 227 residues: Cytochrome c oxidase subunit 2 (227 aa).

At methionine 1–serine 14 the chain is on the mitochondrial intermembrane side. The chain crosses the membrane as a helical span at residues proline 15–methionine 45. The Mitochondrial matrix segment spans residues leucine 46–glutamine 58. Residues glutamate 59–methionine 86 form a helical membrane-spanning segment. Residues aspartate 87–serine 227 are Mitochondrial intermembrane-facing. Residues histidine 160, cysteine 195, glutamate 197, cysteine 199, histidine 203, and methionine 206 each contribute to the Cu cation site. Mg(2+) is bound at residue glutamate 197.

Belongs to the cytochrome c oxidase subunit 2 family. Component of the cytochrome c oxidase (complex IV, CIV), a multisubunit enzyme composed of 14 subunits. The complex is composed of a catalytic core of 3 subunits MT-CO1, MT-CO2 and MT-CO3, encoded in the mitochondrial DNA, and 11 supernumerary subunits COX4I, COX5A, COX5B, COX6A, COX6B, COX6C, COX7A, COX7B, COX7C, COX8 and NDUFA4, which are encoded in the nuclear genome. The complex exists as a monomer or a dimer and forms supercomplexes (SCs) in the inner mitochondrial membrane with NADH-ubiquinone oxidoreductase (complex I, CI) and ubiquinol-cytochrome c oxidoreductase (cytochrome b-c1 complex, complex III, CIII), resulting in different assemblies (supercomplex SCI(1)III(2)IV(1) and megacomplex MCI(2)III(2)IV(2)). Found in a complex with TMEM177, COA6, COX18, COX20, SCO1 and SCO2. Interacts with TMEM177 in a COX20-dependent manner. Interacts with COX20. Interacts with COX16. The cofactor is Cu cation.

It localises to the mitochondrion inner membrane. The enzyme catalyses 4 Fe(II)-[cytochrome c] + O2 + 8 H(+)(in) = 4 Fe(III)-[cytochrome c] + 2 H2O + 4 H(+)(out). Its function is as follows. Component of the cytochrome c oxidase, the last enzyme in the mitochondrial electron transport chain which drives oxidative phosphorylation. The respiratory chain contains 3 multisubunit complexes succinate dehydrogenase (complex II, CII), ubiquinol-cytochrome c oxidoreductase (cytochrome b-c1 complex, complex III, CIII) and cytochrome c oxidase (complex IV, CIV), that cooperate to transfer electrons derived from NADH and succinate to molecular oxygen, creating an electrochemical gradient over the inner membrane that drives transmembrane transport and the ATP synthase. Cytochrome c oxidase is the component of the respiratory chain that catalyzes the reduction of oxygen to water. Electrons originating from reduced cytochrome c in the intermembrane space (IMS) are transferred via the dinuclear copper A center (CU(A)) of subunit 2 and heme A of subunit 1 to the active site in subunit 1, a binuclear center (BNC) formed by heme A3 and copper B (CU(B)). The BNC reduces molecular oxygen to 2 water molecules using 4 electrons from cytochrome c in the IMS and 4 protons from the mitochondrial matrix. The protein is Cytochrome c oxidase subunit 2 (MT-CO2) of Coturnix japonica (Japanese quail).